Reading from the N-terminus, the 740-residue chain is Ion-translocating oxidoreductase complex subunit C (740 aa).

4Fe-4S ferredoxin-type domains are found at residues 369–397 and 407–436; these read GEPQEEQSCIRCSACADACPADLLPQQLY and KATTHNIADCIECGACAWVCPSNIPLVQYF. [4Fe-4S] cluster contacts are provided by C377, C380, C383, C387, C416, C419, C422, and C426. Disordered regions lie at residues 571 to 590 and 602 to 716; these read LEQQQANAEPEQQVDPRKAA and KLEQ…DPRK. Composition is skewed to low complexity over residues 573–583 and 637–647; these read QQQANAEPEQQ.

It belongs to the 4Fe4S bacterial-type ferredoxin family. RnfC subfamily. As to quaternary structure, the complex is composed of six subunits: RsxA, RsxB, RsxC, RsxD, RsxE and RsxG. It depends on [4Fe-4S] cluster as a cofactor.

Its subcellular location is the cell inner membrane. Functionally, part of a membrane-bound complex that couples electron transfer with translocation of ions across the membrane. Required to maintain the reduced state of SoxR. Probably transfers electron from NAD(P)H to SoxR. The polypeptide is Ion-translocating oxidoreductase complex subunit C (Escherichia coli (strain K12)).